The sequence spans 165 residues: Glucosamine 6-phosphate N-acetyltransferase (165 aa).

The N-acetyltransferase domain occupies 22 to 165 (FKVRPLAKDD…DDCNFMTQRF (144 aa)). Residues threonine 44, 92–95 (KFIH), and 104–106 (EDV) each bind substrate. Residue 114-119 (RQKLGA) participates in acetyl-CoA binding. Substrate contacts are provided by residues 135 to 136 (YK) and arginine 164.

Belongs to the acetyltransferase family. GNA1 subfamily.

It catalyses the reaction D-glucosamine 6-phosphate + acetyl-CoA = N-acetyl-D-glucosamine 6-phosphate + CoA + H(+). Its pathway is nucleotide-sugar biosynthesis; UDP-N-acetyl-alpha-D-glucosamine biosynthesis; N-acetyl-alpha-D-glucosamine 1-phosphate from alpha-D-glucosamine 6-phosphate (route I): step 1/2. The chain is Glucosamine 6-phosphate N-acetyltransferase (gna-1) from Caenorhabditis elegans.